A 262-amino-acid chain; its full sequence is MDQPVLLTGAGGRVGQAILGHIGDAYDWRLLDREPLSDEKIPDSVDSTEVYVADVTDETAVRNAMDGVHAVIHLAGDPRPEAPWDSVLRNNIDGTQQMFDAAVDVGVEKFAFASSNHAVGAYETTDRTPDMYRPHHEFRLDGTELPRPSNLYGVSKAAGETLGRYYHDHHDISVVNVRIGNLTQHHPPKEYERGQAMWLSYRDCGHLFECCIEADYDYEIVYGISDNDRKYYSIDRARAVLGYDPQDNSAEFTFEGEPLDEA.

Residues asparagine 90, serine 115, tyrosine 152, and lysine 156 each coordinate NAD(+). The active-site Proton acceptor is tyrosine 152.

It belongs to the NAD(P)-dependent epimerase/dehydratase family. As to quaternary structure, homodimer.

The catalysed reaction is D-glucose 6-phosphate + NAD(+) = 6-phospho-D-glucono-1,5-lactone + NADH + H(+). It participates in carbohydrate degradation; pentose phosphate pathway. In terms of biological role, catalyzes the NAD-dependent oxidation of glucose 6-phosphate to 6-phosphogluconolactone. This is NAD-dependent glucose-6-phosphate dehydrogenase from Haloferax volcanii (strain ATCC 29605 / DSM 3757 / JCM 8879 / NBRC 14742 / NCIMB 2012 / VKM B-1768 / DS2) (Halobacterium volcanii).